Reading from the N-terminus, the 280-residue chain is Threonylcarbamoyl-AMP synthase (280 aa).

Residues 1–56 (MSTARPCAGLRAAVAAGMGLSDGPAGSSRGCRLLRPPAPAPALPGARLLRLPESEA) constitute a mitochondrion transit peptide. S61 is subject to Phosphoserine. One can recognise a YrdC-like domain in the interval 68–258 (TEALRAAVAE…KFGIIRSGCA (191 aa)).

Belongs to the SUA5 family. As to quaternary structure, interacts with RSC1A1.

The protein localises to the cytoplasm. It is found in the mitochondrion. It localises to the cell membrane. The enzyme catalyses L-threonine + hydrogencarbonate + ATP = L-threonylcarbamoyladenylate + diphosphate + H2O. Functionally, cytoplasmic and mitochondrial threonylcarbamoyl-AMP synthase required for the formation of a threonylcarbamoyl group on adenosine at position 37 (t(6)A37) in tRNAs that read codons beginning with adenine. Catalyzes the conversion of L-threonine, HCO(3)(-)/CO(2) and ATP to give threonylcarbamoyl-AMP (TC-AMP) as the acyladenylate intermediate, with the release of diphosphate. Participates in t(6)A37 formation in cytoplasmic and mitochondrial tRNAs. May regulate the activity of some transporters. The polypeptide is Threonylcarbamoyl-AMP synthase (Rattus norvegicus (Rat)).